The chain runs to 113 residues: Small ribosomal subunit protein bS6 (113 aa).

This sequence belongs to the bacterial ribosomal protein bS6 family.

In terms of biological role, binds together with bS18 to 16S ribosomal RNA. In Vesicomyosocius okutanii subsp. Calyptogena okutanii (strain HA), this protein is Small ribosomal subunit protein bS6.